Consider the following 72-residue polypeptide: MAKKDVIELEGTVSEALPNAMFKVKLENGHEILCHISGKLRMNFIRILEGDKVNVELSPYDLTRGRITWRKK.

In terms of domain architecture, S1-like spans 1–72; that stretch reads MAKKDVIELE…TRGRITWRKK (72 aa).

It belongs to the IF-1 family. As to quaternary structure, component of the 30S ribosomal translation pre-initiation complex which assembles on the 30S ribosome in the order IF-2 and IF-3, IF-1 and N-formylmethionyl-tRNA(fMet); mRNA recruitment can occur at any time during PIC assembly.

It is found in the cytoplasm. Functionally, one of the essential components for the initiation of protein synthesis. Stabilizes the binding of IF-2 and IF-3 on the 30S subunit to which N-formylmethionyl-tRNA(fMet) subsequently binds. Helps modulate mRNA selection, yielding the 30S pre-initiation complex (PIC). Upon addition of the 50S ribosomal subunit IF-1, IF-2 and IF-3 are released leaving the mature 70S translation initiation complex. The sequence is that of Translation initiation factor IF-1 from Clostridioides difficile (strain 630) (Peptoclostridium difficile).